The chain runs to 328 residues: L-tyrosine isonitrile synthase (328 aa).

Belongs to the isocyanide synthase family. Monomer in solution.

The catalysed reaction is D-ribulose 5-phosphate + L-tyrosine = (2S)-3-(4-hydroxyphenyl)-2-isocyanopropanoate + hydroxyacetone + formaldehyde + phosphate + H2O + H(+). Functionally, involved in the biosynthesis of paerucumarin, a cyclized isocyano derivative of tyrosine. Responsible for the synthesis of the isonitrile group on tyrosine using the C2 of ribulose 5-phosphate as the source of the carbon atom. This Pseudomonas aeruginosa (strain ATCC 15692 / DSM 22644 / CIP 104116 / JCM 14847 / LMG 12228 / 1C / PRS 101 / PAO1) protein is L-tyrosine isonitrile synthase.